The sequence spans 179 residues: Adenine phosphoribosyltransferase (179 aa).

It belongs to the purine/pyrimidine phosphoribosyltransferase family. As to quaternary structure, homodimer.

The protein resides in the cytoplasm. The enzyme catalyses AMP + diphosphate = 5-phospho-alpha-D-ribose 1-diphosphate + adenine. It functions in the pathway purine metabolism; AMP biosynthesis via salvage pathway; AMP from adenine: step 1/1. Catalyzes a salvage reaction resulting in the formation of AMP, that is energically less costly than de novo synthesis. The polypeptide is Adenine phosphoribosyltransferase (Helicobacter pylori (strain J99 / ATCC 700824) (Campylobacter pylori J99)).